Here is a 777-residue protein sequence, read N- to C-terminus: Ral guanine nucleotide dissociation stimulator-like 2 (777 aa).

The segment at 1–54 is disordered; the sequence is MLPRPLRLLLDTSPPGGVVLSSFRSRDPEEGGGPGGLVVGGGQEEEEEEEEEAP. The residue at position 13 (Ser13) is a Phosphoserine. The span at 31 to 42 shows a compositional bias: gly residues; that stretch reads GGGPGGLVVGGG. Residues 43–54 show a composition bias toward acidic residues; it reads QEEEEEEEEEAP. The N-terminal Ras-GEF domain occupies 88-212; sequence SSRRLRAGTL…GSADLIRNLR (125 aa). Residues 243-513 enclose the Ras-GEF domain; it reads LADHLAEQLT…HRVSCEVEPP (271 aa). Ser409 is subject to Phosphoserine. 2 stretches are compositionally biased toward low complexity: residues 581–610 and 618–632; these read SLDSALESSPSLHSPADPSHLSPPASSPRP and ASCGSPLSGGAEEAS. Disordered regions lie at residues 581–644 and 734–766; these read SLDS…GSGP and RRSSTATPGVTSGPSASGTPPSEGGGGSFPRIK. Over residues 633–644 the composition is skewed to gly residues; it reads GGTGYGGEGSGP. A Ras-associating domain is found at 648 to 735; sequence DCRIIRVQME…HDFLLRQRRR (88 aa). Over residues 740–755 the composition is skewed to low complexity; it reads TPGVTSGPSASGTPPS.

Interacts with SAMD9.

In terms of biological role, probable guanine nucleotide exchange factor. Putative effector of Ras and/or Rap. Associates with the GTP-bound form of Rap 1A and H-Ras in vitro. In Homo sapiens (Human), this protein is Ral guanine nucleotide dissociation stimulator-like 2 (RGL2).